Consider the following 981-residue polypeptide: Mineralocorticoid receptor (981 aa).

Residues M1–I603 form a modulating region. The segment covering S234–G258 has biased composition (polar residues). Disordered stretches follow at residues S234–V331 and A355–P376. A phosphoserine mark is found at S250, S259, S283, S287, and S299. Low complexity-rich tracts occupy residues S259–P300 and S309–T327. Residues C604, C607, C621, C624, C640, C646, C656, and C659 each coordinate Zn(2+). NR C4-type zinc fingers lie at residues C604 to C624 and C640 to C664. The segment at residues C604 to M669 is a DNA-binding region (nuclear receptor). A hinge region spans residues N670–P722. Residues G684–P710 are disordered. Positions Q691–S700 are enriched in pro residues. An NR LBD domain is found at Q723–I961. 2 residues coordinate 21-hydroxyprogesterone: N767 and Q773. Aldosterone is bound by residues N767 and Q773. 2 residues coordinate progesterone: N767 and Q773. Residues K779–K782 are important for coactivator binding. 21-hydroxyprogesterone-binding residues include R814 and T942. Aldosterone is bound by residues R814 and T942. 2 residues coordinate progesterone: R814 and T942.

It belongs to the nuclear hormone receptor family. NR3 subfamily. As to quaternary structure, heteromultimeric cytoplasmic complex with HSP90, HSP70, and FKBP4, in the absence of ligand. After ligand binding, it translocates to the nucleus and binds to DNA as a homodimer and as a heterodimer with NR3C1. Binds the coactivator NCOA2. May interact with HSD11B2 in the absence of ligand. Binds the coactivators NCOA1, TIF1 and NRIP1. In terms of processing, phosphorylated. In terms of tissue distribution, detected in liver, brain, heart, kidney, colon, aorta, hippocampus, hypothalamus and adrenal fasciculata.

Its subcellular location is the cytoplasm. The protein localises to the nucleus. The protein resides in the endoplasmic reticulum membrane. Its function is as follows. Receptor for both mineralocorticoids (MC) such as aldosterone and glucocorticoids (GC) such as corticosterone or cortisol. Binds to mineralocorticoid response elements (MRE) and transactivates target genes. The effect of MC is to increase ion and water transport and thus raise extracellular fluid volume and blood pressure and lower potassium levels. The protein is Mineralocorticoid receptor (Nr3c2) of Rattus norvegicus (Rat).